A 221-amino-acid polypeptide reads, in one-letter code: ATP-dependent dethiobiotin synthetase BioD (221 aa).

Glycine 11–tyrosine 16 contacts ATP. Residue threonine 15 participates in Mg(2+) binding. Lysine 36 is an active-site residue. Residue threonine 40 coordinates substrate. ATP is bound by residues aspartate 48 and glutamate 107–glycine 110. Mg(2+) is bound by residues aspartate 48 and glutamate 107.

It belongs to the dethiobiotin synthetase family. Homodimer. Mg(2+) serves as cofactor.

The protein localises to the cytoplasm. It catalyses the reaction (7R,8S)-7,8-diammoniononanoate + CO2 + ATP = (4R,5S)-dethiobiotin + ADP + phosphate + 3 H(+). The protein operates within cofactor biosynthesis; biotin biosynthesis; biotin from 7,8-diaminononanoate: step 1/2. Functionally, catalyzes a mechanistically unusual reaction, the ATP-dependent insertion of CO2 between the N7 and N8 nitrogen atoms of 7,8-diaminopelargonic acid (DAPA, also called 7,8-diammoniononanoate) to form a ureido ring. This chain is ATP-dependent dethiobiotin synthetase BioD, found in Hydrogenobaculum sp. (strain Y04AAS1).